A 349-amino-acid polypeptide reads, in one-letter code: tRNA N6-adenosine threonylcarbamoyltransferase (349 aa).

Fe cation contacts are provided by H113 and H117. Substrate contacts are provided by residues 135-139 (LVSGG), D169, G182, D186, and N281. D309 serves as a coordination point for Fe cation.

This sequence belongs to the KAE1 / TsaD family. The cofactor is Fe(2+).

It localises to the cytoplasm. It catalyses the reaction L-threonylcarbamoyladenylate + adenosine(37) in tRNA = N(6)-L-threonylcarbamoyladenosine(37) in tRNA + AMP + H(+). In terms of biological role, required for the formation of a threonylcarbamoyl group on adenosine at position 37 (t(6)A37) in tRNAs that read codons beginning with adenine. Is involved in the transfer of the threonylcarbamoyl moiety of threonylcarbamoyl-AMP (TC-AMP) to the N6 group of A37, together with TsaE and TsaB. TsaD likely plays a direct catalytic role in this reaction. The chain is tRNA N6-adenosine threonylcarbamoyltransferase from Corynebacterium aurimucosum (strain ATCC 700975 / DSM 44827 / CIP 107346 / CN-1) (Corynebacterium nigricans).